A 561-amino-acid chain; its full sequence is V-type proton ATPase catalytic subunit A (561 aa).

Residue 190–197 (GAFGCGKT) coordinates ATP.

This sequence belongs to the ATPase alpha/beta chains family. V-ATPase is a heteromultimeric enzyme composed of a peripheral catalytic V1 complex (main components: subunits A, B, C, D, E, and F) attached to an integral membrane V0 proton pore complex (main component: the proteolipid protein). High expression in the mesocotyl tip of etiolated seedlings compared to the base.

The enzyme catalyses ATP + H2O + 4 H(+)(in) = ADP + phosphate + 5 H(+)(out). In terms of biological role, catalytic subunit of the peripheral V1 complex of vacuolar ATPase. V-ATPase vacuolar ATPase is responsible for acidifying a variety of intracellular compartments in eukaryotic cells. The protein is V-type proton ATPase catalytic subunit A of Zea mays (Maize).